A 35-amino-acid chain; its full sequence is Sperm protamine alpha isoform 1 (35 aa).

Residues 1 to 35 (MPRRRRRASRPVRRRRRARRSTAVRRRRRVVRRRR) are disordered. Residues S9 and S21 each carry the phosphoserine modification.

In terms of processing, phosphorylated in immature sperm. Dephosphorylated in mature sperm allowing a stronger interaction with DNA. In terms of tissue distribution, gonads.

The protein resides in the nucleus. It is found in the chromosome. Functionally, protamines substitute for histones in the chromatin of sperm during the haploid phase of spermatogenesis. They compact sperm DNA into a highly condensed, stable and inactive complex. The protein is Sperm protamine alpha isoform 1 of Scomber scombrus (Atlantic mackerel).